Reading from the N-terminus, the 448-residue chain is Protease Do-like 8, chloroplastic (448 aa).

Residues 152 to 333 (EGNGSGVVWD…IPSSTVLKIV (182 aa)) are serine protease. Residues histidine 171, aspartate 214, and serine 292 each act as charge relay system in the active site. Residues 336–433 (LIQFSKVLRA…DKVTLKIKRG (98 aa)) enclose the PDZ domain.

Belongs to the peptidase S1C family.

The protein resides in the plastid. Its subcellular location is the chloroplast thylakoid lumen. Functionally, probable serine protease. In Arabidopsis thaliana (Mouse-ear cress), this protein is Protease Do-like 8, chloroplastic (DEGP8).